The primary structure comprises 936 residues: ABC transporter A family member 5 (936 aa).

Helical transmembrane passes span 34–54, 340–360, 393–413, 422–442, 454–474, 484–501, and 527–547; these read LIVI…LFDT, ASLI…PVML, FLAI…AIGL, SIQF…AFLV, VAAY…FQFL, WIYI…RGLY, and AMEE…IAAY. The ABC transporter domain occupies 614–851; the sequence is IVCDNLKKVY…YGGSYVLTMT (238 aa). 652 to 659 lines the ATP pocket; that stretch reads GPNGAGKT.

The protein belongs to the ABC transporter superfamily. ABCA family. CPR flippase (TC 3.A.1.211) subfamily.

Its subcellular location is the membrane. The polypeptide is ABC transporter A family member 5 (ABCA5) (Arabidopsis thaliana (Mouse-ear cress)).